The chain runs to 521 residues: Occludin (521 aa).

Residues 1–20 (MSVRPFESPPPYRPDEFKPN) are disordered. Over 1 to 66 (MSVRPFESPP…KWTSPPGVIR (66 aa)) the chain is Cytoplasmic. One can recognise an MARVEL domain in the interval 60-267 (SPPGVIRILS…IIFFAVKTRR (208 aa)). Residues 67–89 (ILSMLIIVMCIAIFACVASTLAW) traverse the membrane as a helical segment. Topologically, residues 90-133 (DRGYGTGLFGGSLNYPYSGFGYGGGYGGGYGGYGYGYGGYTDPR) are extracellular. Residues 134–158 (AAKGFLLAMAAFCFIASLVIFVTSV) traverse the membrane as a helical segment. The Cytoplasmic segment spans residues 159-168 (IRSGMSRTRR). Residues 169 to 193 (YYLIVIIVSAILGIMVFIATIVYIM) form a helical membrane-spanning segment. Topologically, residues 194–241 (GVNPTAQASGSMYGSQIYMICNQFYTPGGTGLYVDQYLYHYCVVDPQE) are extracellular. The cysteines at positions 214 and 235 are disulfide-linked. The chain crosses the membrane as a helical span at residues 242-263 (AIAIVLGFMIIVAFALIIFFAV). Over 264–521 (KTRRKMDRYD…MVGDYDRRKP (258 aa)) the chain is Cytoplasmic. The residue at position 300 (Ser300) is a Phosphoserine. Positions 300-329 (SAGTQDMPPPPSDYAERVDSPMAYSSNGKV) are disordered. Position 303 is a phosphothreonine (Thr303). 2 positions are modified to phosphoserine: Ser311 and Ser319. Ser338 is subject to Phosphoserine; by PKC; in vitro. Ser358 bears the Phosphoserine mark. Residues 361–405 (DFRQPRYSSNGNLETPSKRAPTKGKAGKGKRTDPDHYETDYTTGG) form a disordered region. A compositionally biased stretch (polar residues) spans 366–375 (RYSSNGNLET). Tyr367 is modified (phosphotyrosine). Phosphoserine is present on residues Ser368 and Ser369. Residues 380–389 (APTKGKAGKG) show a composition bias toward basic residues. Residues 390–399 (KRTDPDHYET) are compositionally biased toward basic and acidic residues. Phosphotyrosine occurs at positions 397 and 401. At Thr402 the chain carries Phosphothreonine; by PKC/PRKCH. The residue at position 403 (Thr403) is a Phosphothreonine. Position 407 is a phosphoserine (Ser407). Positions 413–521 (EDWVREYPPI…MVGDYDRRKP (109 aa)) constitute an OCEL domain. Residues 424-488 (SDQQRQLYKR…EYNRLKQVKG (65 aa)) are a coiled coil. Ser489 carries the phosphoserine modification.

Belongs to the ELL/occludin family. As to quaternary structure, interacts with TJP1/ZO1. Interacts with VAPA. Interacts with CLDN1, CLDN6, CLDN9, CLDN11, CLDN12 and CLDN17. Interacts with PLSCR1. Interacts with LSR, ILDR1 and ILDR2. Interacts with TJP2/ZO2. Dephosphorylated by PTPRJ. May be phosphorylated by PKC during translocation to cell-cell contacts. Localized at tight junctions of both epithelial and endothelial cells. Highly expressed in the testis, kidney, lung, liver and brain. Not detected in skeletal muscle, spleen and heart.

Its subcellular location is the cell membrane. It localises to the cell junction. The protein localises to the tight junction. Its function is as follows. May play a role in the formation and regulation of the tight junction (TJ) paracellular permeability barrier. The polypeptide is Occludin (Ocln) (Mus musculus (Mouse)).